The chain runs to 271 residues: Acetyl-coenzyme A carboxylase carboxyl transferase subunit beta (271 aa).

The CoA carboxyltransferase N-terminal domain maps to 21-271; sequence LWIQCPYCKQ…LGDLLALHTA (251 aa). The Zn(2+) site is built by Cys25, Cys28, Cys43, and Cys46. The C4-type zinc finger occupies 25–46; it reads CPYCKQGSYRESLGNAQVCPHC.

Belongs to the AccD/PCCB family. Acetyl-CoA carboxylase is a heterohexamer composed of biotin carboxyl carrier protein (AccB), biotin carboxylase (AccC) and two subunits each of ACCase subunit alpha (AccA) and ACCase subunit beta (AccD). Zn(2+) is required as a cofactor.

Its subcellular location is the cytoplasm. It carries out the reaction N(6)-carboxybiotinyl-L-lysyl-[protein] + acetyl-CoA = N(6)-biotinyl-L-lysyl-[protein] + malonyl-CoA. Its pathway is lipid metabolism; malonyl-CoA biosynthesis; malonyl-CoA from acetyl-CoA: step 1/1. Functionally, component of the acetyl coenzyme A carboxylase (ACC) complex. Biotin carboxylase (BC) catalyzes the carboxylation of biotin on its carrier protein (BCCP) and then the CO(2) group is transferred by the transcarboxylase to acetyl-CoA to form malonyl-CoA. The protein is Acetyl-coenzyme A carboxylase carboxyl transferase subunit beta of Lacticaseibacillus paracasei (strain ATCC 334 / BCRC 17002 / CCUG 31169 / CIP 107868 / KCTC 3260 / NRRL B-441) (Lactobacillus paracasei).